A 119-amino-acid polypeptide reads, in one-letter code: Ribonuclease P protein component (119 aa).

This sequence belongs to the RnpA family. Consists of a catalytic RNA component (M1 or rnpB) and a protein subunit.

It catalyses the reaction Endonucleolytic cleavage of RNA, removing 5'-extranucleotides from tRNA precursor.. In terms of biological role, RNaseP catalyzes the removal of the 5'-leader sequence from pre-tRNA to produce the mature 5'-terminus. It can also cleave other RNA substrates such as 4.5S RNA. The protein component plays an auxiliary but essential role in vivo by binding to the 5'-leader sequence and broadening the substrate specificity of the ribozyme. In Beutenbergia cavernae (strain ATCC BAA-8 / DSM 12333 / CCUG 43141 / JCM 11478 / NBRC 16432 / NCIMB 13614 / HKI 0122), this protein is Ribonuclease P protein component.